A 400-amino-acid polypeptide reads, in one-letter code: MGFVLVPKSDFQIPLEADTIRPDLFEGLDLDEIRSLQVYEGNIKRPLGEFFEIAETPHADQLIRIDGDVSRVKYIGSGMKSGKIIINGDVGLQLGCEMKGGEIEVNGNVSSWIGMEMHGGTIKINGNAGDYVGCAYRGEWRGMKGGKIIIQGNAGNNIGGGMMAGEIYIGGDAGNFCGIRMNGGEITVRGDAGRAPGAEMVSGIIKIHGRISSLLPGFKEISTFKEDGSLMILFKGDLSEKNPEGNLYINYNKNLHILENETDEGRVITKKGIKVIYNSGSTIREGQIIKGGNKLTDDYIDECARCCISPEDYKLLGEPENVVVSSHGNEVVLRAVEDPGIQMGTIFIPRGIWANVLTPPYTESTGSPMYKGVPVYLRKASQGERILSAEELVEEYGVGK.

7 consecutive repeat copies span residues 76 to 88, 95 to 107, 114 to 126, 140 to 152, 159 to 171, 178 to 190, and 197 to 209. The tract at residues 76–209 is 7 X 13 AA repeats of [GW]-X-X-M-X-X-G-X-I-X-[IV]-X-G; it reads GSGMKSGKII…MVSGIIKIHG (134 aa).

This sequence in the N-terminal section; belongs to the FwdC/FmdC family. It in the C-terminal section; belongs to the molybdenum dinucleotide binding protein family. Consists of five subunits; FmdA, FmdB, FmdC, FmdD, and FmdE.

The enzyme catalyses N-formylmethanofuran + 2 oxidized [2Fe-2S]-[ferredoxin] + H2O = methanofuran + 2 reduced [2Fe-2S]-[ferredoxin] + CO2 + H(+). Its pathway is one-carbon metabolism; methanogenesis from CO(2); 5,10-methenyl-5,6,7,8-tetrahydromethanopterin from CO(2): step 1/3. With respect to regulation, inactivated by cyanide. Its function is as follows. Catalyzes the reversible oxidation of CO(2) and methanofuran (MFR) to N-formylmethanofuran (CHO-MFR). Can only oxidize formylmethanofuran. This enzyme is oxygen-labile. This is Molybdenum-containing formylmethanofuran dehydrogenase 1 subunit C (fmdC) from Methanothermobacter thermautotrophicus (strain ATCC 29096 / DSM 1053 / JCM 10044 / NBRC 100330 / Delta H) (Methanobacterium thermoautotrophicum).